The following is a 242-amino-acid chain: Protein crossbronx (242 aa).

The region spanning 20-176 (QQEYKILAEY…VQENIKESKA (157 aa)) is the UBC core domain.

The protein belongs to the ubiquitin-conjugating enzyme family. FTS subfamily.

This Drosophila ananassae (Fruit fly) protein is Protein crossbronx (cbx).